Here is a 508-residue protein sequence, read N- to C-terminus: UDP-N-acetylmuramoyl-L-alanyl-D-glutamate--2,6-diaminopimelate ligase (508 aa).

A UDP-N-acetyl-alpha-D-muramoyl-L-alanyl-D-glutamate-binding site is contributed by Ser43. 124–130 serves as a coordination point for ATP; the sequence is GTNGKTT. UDP-N-acetyl-alpha-D-muramoyl-L-alanyl-D-glutamate contacts are provided by residues 166–167, Ser193, and Arg201; that span reads TT. Residue Lys233 is modified to N6-carboxylysine. Meso-2,6-diaminopimelate is bound by residues Arg404, 428–431, Gly478, and Glu482; that span reads DNPR. Positions 428–431 match the Meso-diaminopimelate recognition motif motif; sequence DNPR.

The protein belongs to the MurCDEF family. MurE subfamily. Mg(2+) is required as a cofactor. Carboxylation is probably crucial for Mg(2+) binding and, consequently, for the gamma-phosphate positioning of ATP.

It localises to the cytoplasm. It catalyses the reaction UDP-N-acetyl-alpha-D-muramoyl-L-alanyl-D-glutamate + meso-2,6-diaminopimelate + ATP = UDP-N-acetyl-alpha-D-muramoyl-L-alanyl-gamma-D-glutamyl-meso-2,6-diaminopimelate + ADP + phosphate + H(+). It functions in the pathway cell wall biogenesis; peptidoglycan biosynthesis. In terms of biological role, catalyzes the addition of meso-diaminopimelic acid to the nucleotide precursor UDP-N-acetylmuramoyl-L-alanyl-D-glutamate (UMAG) in the biosynthesis of bacterial cell-wall peptidoglycan. This Chlorobaculum tepidum (strain ATCC 49652 / DSM 12025 / NBRC 103806 / TLS) (Chlorobium tepidum) protein is UDP-N-acetylmuramoyl-L-alanyl-D-glutamate--2,6-diaminopimelate ligase.